Here is a 156-residue protein sequence, read N- to C-terminus: Small ribosomal subunit protein uS7 (156 aa).

Belongs to the universal ribosomal protein uS7 family. In terms of assembly, part of the 30S ribosomal subunit. Contacts proteins S9 and S11.

Its function is as follows. One of the primary rRNA binding proteins, it binds directly to 16S rRNA where it nucleates assembly of the head domain of the 30S subunit. Is located at the subunit interface close to the decoding center, probably blocks exit of the E-site tRNA. The sequence is that of Small ribosomal subunit protein uS7 from Acaryochloris marina (strain MBIC 11017).